We begin with the raw amino-acid sequence, 166 residues long: Large ribosomal subunit protein uL10 (166 aa).

Belongs to the universal ribosomal protein uL10 family. As to quaternary structure, part of the ribosomal stalk of the 50S ribosomal subunit. The N-terminus interacts with L11 and the large rRNA to form the base of the stalk. The C-terminus forms an elongated spine to which L12 dimers bind in a sequential fashion forming a multimeric L10(L12)X complex.

Its function is as follows. Forms part of the ribosomal stalk, playing a central role in the interaction of the ribosome with GTP-bound translation factors. This chain is Large ribosomal subunit protein uL10 (rplJ), found in Neisseria meningitidis serogroup A / serotype 4A (strain DSM 15465 / Z2491).